We begin with the raw amino-acid sequence, 305 residues long: Serine/threonine-protein kinase 16 (305 aa).

Gly-2 is lipidated: N-myristoyl glycine. 2 S-palmitoyl cysteine lipidation sites follow: Cys-6 and Cys-8. Residues 20–293 form the Protein kinase domain; the sequence is YLFVQKLGEG…PVLLSQLEAL (274 aa). Residues 26 to 34 and Lys-49 each bind ATP; that span reads LGEGGFSYV. Asp-148 functions as the Proton acceptor in the catalytic mechanism. The interval 166–202 is activation loop; the sequence is DLGSMNQACIQVEGSRQALALQDWAAQRCTISYRAPE. Residue Ser-197 is modified to Phosphoserine; by autocatalysis. Tyr-198 is subject to Phosphotyrosine; by autocatalysis.

It belongs to the protein kinase superfamily. Ser/Thr protein kinase family. Monomer. Interacts with DRG1 (via its N-terminal); the interaction phosphorylates DRG1. Post-translationally, mainly autophosphorylated on serine/threonine residues. Also autophosphorylated on Tyr-198. In terms of tissue distribution, expressed in heart, liver, brain, spleen, lung, skeletal muscle, kidney and testis.

The protein resides in the cytoplasm. The protein localises to the perinuclear region. It is found in the membrane. The enzyme catalyses L-seryl-[protein] + ATP = O-phospho-L-seryl-[protein] + ADP + H(+). It catalyses the reaction L-threonyl-[protein] + ATP = O-phospho-L-threonyl-[protein] + ADP + H(+). The catalysed reaction is L-tyrosyl-[protein] + ATP = O-phospho-L-tyrosyl-[protein] + ADP + H(+). Functionally, membrane-associated protein kinase that phosphorylates on serine and threonine residues. In vitro substrates include DRG1, ENO1 and EIF4EBP1. Also autophosphorylates. May be involved in secretory vesicle trafficking or intracellular signaling. May have a role in regulating stromal-epithelial interactions that occur during ductal morphogenesis in the mammary gland. May be involved in TGF-beta signaling. Able to autophosphorylate on Tyr residue; it is however unclear whether it has tyrosine-protein kinase toward other proteins. The chain is Serine/threonine-protein kinase 16 (Stk16) from Rattus norvegicus (Rat).